A 64-amino-acid chain; its full sequence is Large ribosomal subunit protein bL33c (64 aa).

This sequence belongs to the bacterial ribosomal protein bL33 family.

The protein localises to the plastid. It is found in the organellar chromatophore. This Paulinella chromatophora protein is Large ribosomal subunit protein bL33c.